We begin with the raw amino-acid sequence, 1136 residues long: Probable phospholipid-transporting ATPase IIB (1136 aa).

Over 1 to 145 (MADQIPLYPV…IKNQKYNIFT (145 aa)) the chain is Cytoplasmic. Residues 146 to 166 (FIPGVLYEQFKFFLNLYFLIV) form a helical membrane-spanning segment. At 167–174 (SCSQFVPA) the chain is on the extracellular side. A helical membrane pass occupies residues 175-195 (LKIGYLYTYWAPLGFVLAVTI). Residues 196 to 383 (MREAVDEFRR…LDLELNQLTK (188 aa)) lie on the Cytoplasmic side of the membrane. The helical transmembrane segment at 384 to 404 (ALFLALVALSVVMVTLQGFAG) threads the bilayer. At 405-408 (PWYR) the chain is on the extracellular side. Residues 409–429 (SLFRFLLLFSYIIPISLRVNL) form a helical membrane-spanning segment. Residues 430–939 (DMGKAAYGWM…ALGQFVMHRG (510 aa)) lie on the Cytoplasmic side of the membrane. The 4-aspartylphosphate intermediate role is filled by Asp-469. Residues Asp-469, Lys-470, and Thr-471 each coordinate ATP. Asp-469 serves as a coordination point for Mg(2+). A Mg(2+)-binding site is contributed by Thr-471. The interval 514-538 (AGGSSAASTPPRKAPSSAPKVRRSV) is disordered. Residues Glu-591, Phe-633, Lys-638, Lys-657, Arg-686, Thr-687, Thr-766, Gly-767, Asp-768, Arg-848, and Lys-854 each coordinate ATP. Asp-874 contributes to the Mg(2+) binding site. 2 residues coordinate ATP: Asn-877 and Asp-878. Residue Asp-878 coordinates Mg(2+). A helical membrane pass occupies residues 940 to 960 (LIISTMQAVFSSVFYFASVPL). Residues 961–962 (YQ) lie on the Extracellular side of the membrane. A helical membrane pass occupies residues 963-983 (GFLMVGYATVYTMFPVFSLVL). The Cytoplasmic segment spans residues 984–1012 (DQDVKPEMAMLYPELYKDLTKGRSLSFKT). Residues 1013 to 1033 (FLVWVLISIYQGGILMFGALV) form a helical membrane-spanning segment. The Extracellular segment spans residues 1034 to 1041 (LFESEFVH). Residues 1042–1062 (VVAISFTALVLTELLMVALTV) traverse the membrane as a helical segment. The Cytoplasmic segment spans residues 1063 to 1066 (RTWH). The helical transmembrane segment at 1067 to 1087 (WLMVVAQLLSLGCYVASLAFL) threads the bilayer. Residues 1088–1098 (NEYFDVAFITT) are Extracellular-facing. Residues 1099 to 1119 (VTFVWKVSAITVVSCLPLYVL) form a helical membrane-spanning segment. Over 1120 to 1136 (KYLKRKLSPPSYSKLSS) the chain is Cytoplasmic.

The protein belongs to the cation transport ATPase (P-type) (TC 3.A.3) family. Type IV subfamily. The cofactor is Mg(2+).

The protein localises to the golgi apparatus. It localises to the trans-Golgi network membrane. It carries out the reaction ATP + H2O + phospholipidSide 1 = ADP + phosphate + phospholipidSide 2.. In Bos taurus (Bovine), this protein is Probable phospholipid-transporting ATPase IIB (ATP9B).